Reading from the N-terminus, the 414-residue chain is Esterase FrsA (414 aa).

It belongs to the FrsA family.

The enzyme catalyses a carboxylic ester + H2O = an alcohol + a carboxylate + H(+). Functionally, catalyzes the hydrolysis of esters. This chain is Esterase FrsA, found in Shigella dysenteriae serotype 1 (strain Sd197).